The chain runs to 566 residues: Ubiquitin carboxyl-terminal hydrolase 21 (566 aa).

Composition is skewed to basic and acidic residues over residues 1–14 and 58–70; these read MPQA…RTRE and PPDE…ELGR. Disordered regions lie at residues 1-103 and 146-169; these read MPQA…LPLP and PEPP…PPTL. Composition is skewed to low complexity over residues 71 to 81 and 151 to 160; these read GRTSGSRPRGP and LRRSTSLRRL. The short motif at 134–152 is the Nuclear export signal element; the sequence is ELGAALSRLALRPEPPTLR. Residues 212–559 enclose the USP domain; sequence VGLRNLGNTC…EGYVLFYQLM (348 aa). Cys-221 (nucleophile) is an active-site residue. Positions 324 to 349 are disordered; that stretch reads APPILASGPVPSPPRRGGGALHEEPE. Residues Cys-385, Cys-388, Cys-438, and Cys-441 each coordinate Zn(2+). His-519 acts as the Proton acceptor in catalysis.

This sequence belongs to the peptidase C19 family. USP21 subfamily. As to quaternary structure, interacts with BEND3.

Its subcellular location is the cytoplasm. The protein resides in the nucleus. The enzyme catalyses Thiol-dependent hydrolysis of ester, thioester, amide, peptide and isopeptide bonds formed by the C-terminal Gly of ubiquitin (a 76-residue protein attached to proteins as an intracellular targeting signal).. Functionally, deubiquitinates histone H2A, a specific tag for epigenetic transcriptional repression, thereby acting as a coactivator. Deubiquitination of histone H2A releaves the repression of di- and trimethylation of histone H3 at 'Lys-4', resulting in regulation of transcriptional initiation. Regulates gene expression via histone H2A deubiquitination. Deubiquitinates BAZ2A/TIP5 leading to its stabilization. Also capable of removing NEDD8 from NEDD8 conjugates but has no effect on Sentrin-1 conjugates. Also acts as a negative regulator of the ribosome quality control (RQC) by mediating deubiquitination of 40S ribosomal proteins RPS10/eS10 and RPS20/uS10, thereby antagonizing ZNF598-mediated 40S ubiquitination. This Mus musculus (Mouse) protein is Ubiquitin carboxyl-terminal hydrolase 21.